A 112-amino-acid chain; its full sequence is MSNIYDSANELSRGLRGLPEYKAVKAAKDAIAADAEASKIFTEYLAFQEEIQKLAHTGQMPDASFQAKMEGFGKQIQGNSLLSEFFTKQQQLAIYLSDIEKIVFEPVSELLK.

It belongs to the UPF0342 family.

The protein is UPF0342 protein SPP_1392 of Streptococcus pneumoniae (strain P1031).